Here is a 226-residue protein sequence, read N- to C-terminus: Phosphoheptose isomerase (226 aa).

The 163-residue stretch at Ile-50–Cys-212 folds into the SIS domain. Asn-65–Gly-67 is a substrate binding site. Zn(2+)-binding residues include His-74 and Glu-78. Residues Glu-78, Asn-109–Asp-110, Ser-135–Ser-137, Ser-140, and Gln-188 each bind substrate. Zn(2+) contacts are provided by Gln-188 and His-196.

The protein belongs to the SIS family. GmhA subfamily. Requires Zn(2+) as cofactor.

It localises to the cytoplasm. The catalysed reaction is 2 D-sedoheptulose 7-phosphate = D-glycero-alpha-D-manno-heptose 7-phosphate + D-glycero-beta-D-manno-heptose 7-phosphate. Its pathway is carbohydrate biosynthesis; D-glycero-D-manno-heptose 7-phosphate biosynthesis; D-glycero-alpha-D-manno-heptose 7-phosphate and D-glycero-beta-D-manno-heptose 7-phosphate from sedoheptulose 7-phosphate: step 1/1. Catalyzes the isomerization of sedoheptulose 7-phosphate in D-glycero-D-manno-heptose 7-phosphate. This chain is Phosphoheptose isomerase, found in Chlorobium phaeobacteroides (strain DSM 266 / SMG 266 / 2430).